The following is a 429-amino-acid chain: MIDHKLIIKNIEEVCKKLILRNFYLDKKKILLQDQKRKILQIEVEKLQNKRNLQSKIISKIKINNKNIDIYKNKSNKINILLNEKKQKLKKIKKEIDNYLSTIPNILDEKVPIGKDQKNNIEVKKWGSPKIYNFKIKSHVEIGEKIKYLDFSRSAKISGSRFVVMKNKISYMHRALSQFMLNLHTNQHGYEEYYVPYLVNKNMLYGTGQLPKFYNDFFYAKSFFEDIQSCYALIPTAEVPLTNLMRNEIIDENYLPIKMTSHTPCFRSEAGSYGKDTKGLIRMHQFDKVEIVQIVSPENSIKALEEITHHAERVLQLLDLPYRKILLCSGDTGFSSCKTYDLEVWMPSRNKYIEVSSCSNTSDFQSRRTKIRYRKISNKEIHLTHILNGSALAISRTLASIIENYQTKEGNIKVPKILQPYMDGLKLIK.

Residue 236-238 coordinates L-serine; that stretch reads TAE. Residue 267 to 269 participates in ATP binding; the sequence is RSE. E290 serves as a coordination point for L-serine. 354 to 357 lines the ATP pocket; it reads EVSS. Residue S390 participates in L-serine binding.

Belongs to the class-II aminoacyl-tRNA synthetase family. Type-1 seryl-tRNA synthetase subfamily. Homodimer. The tRNA molecule binds across the dimer.

Its subcellular location is the cytoplasm. It catalyses the reaction tRNA(Ser) + L-serine + ATP = L-seryl-tRNA(Ser) + AMP + diphosphate + H(+). The enzyme catalyses tRNA(Sec) + L-serine + ATP = L-seryl-tRNA(Sec) + AMP + diphosphate + H(+). It functions in the pathway aminoacyl-tRNA biosynthesis; selenocysteinyl-tRNA(Sec) biosynthesis; L-seryl-tRNA(Sec) from L-serine and tRNA(Sec): step 1/1. Functionally, catalyzes the attachment of serine to tRNA(Ser). Is also able to aminoacylate tRNA(Sec) with serine, to form the misacylated tRNA L-seryl-tRNA(Sec), which will be further converted into selenocysteinyl-tRNA(Sec). The polypeptide is Serine--tRNA ligase (Wigglesworthia glossinidia brevipalpis).